Here is a 502-residue protein sequence, read N- to C-terminus: Lysine--tRNA ligase (502 aa).

Residues Glu403 and Glu410 each coordinate Mg(2+).

The protein belongs to the class-II aminoacyl-tRNA synthetase family. Homodimer. It depends on Mg(2+) as a cofactor.

Its subcellular location is the cytoplasm. The enzyme catalyses tRNA(Lys) + L-lysine + ATP = L-lysyl-tRNA(Lys) + AMP + diphosphate. This chain is Lysine--tRNA ligase, found in Parasynechococcus marenigrum (strain WH8102).